Consider the following 133-residue polypeptide: Large ribosomal subunit protein bL17 (133 aa).

This sequence belongs to the bacterial ribosomal protein bL17 family. In terms of assembly, part of the 50S ribosomal subunit. Contacts protein L32.

The polypeptide is Large ribosomal subunit protein bL17 (Alteromonas mediterranea (strain DSM 17117 / CIP 110805 / LMG 28347 / Deep ecotype)).